Reading from the N-terminus, the 417-residue chain is MSALRHVVCALSGGVDSAVAALLLRRRGYQVTGVFMKNWDSLDEQGVCAADKDCEDAYKVCQILDIPFHQVSYVKEYWNDVFSDFLNEYEKGRTPNPDINCNKHIKFSCFYHYAVDNLGADAVATGHYARTSLEDEEVFEQKHTKKPDGLFRNRFEVRNPVKLLQAADSFKDQTFFLSQVSQDALRRTIFPLGELTKDFVKKIAAENSLHHVLQKRESMGICFIGKRNLEHFLLQYLQPRPGKFVSIEDNTVLGTHKGWFLYTLGQRAKISGLREPWYVVEKDGTKGDVLVAPRVDHPALYRDLLRTNRVHWIAEEPPAALVRDKMMECHFRFRHQMALVPCVLTLNQDGTVWVTAVKAVRGLALGQFAVFYKGEECLGSGKILRLGPSAYTLQKGKNRTRVAPEASSDSPGLHPTS.

ATP-binding positions include 10–17 (ALSGGVDS) and Met-36. The interaction with target base in tRNA stretch occupies residues 96–98 (NPD). The Nucleophile role is filled by Cys-101. A disulfide bond links Cys-101 and Cys-222. An ATP-binding site is contributed by Gly-126. Residues 171 to 173 (KDQ) are interaction with tRNA. The active-site Cysteine persulfide intermediate is Cys-222. Residues 334–335 (RH) are interaction with tRNA. The segment at 397–417 (KNRTRVAPEASSDSPGLHPTS) is disordered. Residues 407–417 (SSDSPGLHPTS) show a composition bias toward polar residues.

Belongs to the MnmA/TRMU family. As to expression, widely expressed but most abundant in tissues with high metabolic rate including heart, liver and brain. Expression is low in spleen, testis, lung and skeletal muscle. Also expressed in inner ear.

It localises to the mitochondrion. It carries out the reaction 5-taurinomethyluridine(34) in tRNA + S-sulfanyl-L-cysteinyl-[protein] + AH2 + ATP = 5-taurinomethyl-2-thiouridine(34) in tRNA + L-cysteinyl-[protein] + A + AMP + diphosphate + H(+). Catalyzes the 2-thiolation of uridine at the wobble position (U34) of mitochondrial tRNA(Lys), tRNA(Glu) and tRNA(Gln). Required for the formation of 5-taurinomethyl-2-thiouridine (tm5s2U) of mitochondrial tRNA(Lys), tRNA(Glu), and tRNA(Gln) at the wobble position. ATP is required to activate the C2 atom of the wobble base. The polypeptide is Mitochondrial tRNA-specific 2-thiouridylase 1 (Trmu) (Mus musculus (Mouse)).